A 115-amino-acid polypeptide reads, in one-letter code: Replication initiation control protein YabA (115 aa).

Residues H85, C87, C101, and C104 each contribute to the Zn(2+) site.

The protein belongs to the YabA family. In terms of assembly, homotetramer. Interacts with both DnaA and DnaN, acting as a bridge between these two proteins. It depends on Zn(2+) as a cofactor.

It localises to the cytoplasm. It is found in the nucleoid. Functionally, involved in control of chromosome replication initiation. Inhibits the cooperative binding of DnaA to the oriC region, thus negatively regulating initiation of chromosome replication. Inhibits the ability of DnaA-ATP to form a helix on DNA; does not disassemble preformed DnaA-DNA helices. Decreases the residence time of DnaA on the chromosome at its binding sites (oriC, replication forks and promoter-binding sites). Tethers DnaA to the replication machinery via the DNA polymerase beta sliding clamp subunit (dnaN). Associates with oriC and other DnaA targets on the chromosome in a DnaA-dependent manner. This is Replication initiation control protein YabA from Lactiplantibacillus plantarum (strain ATCC BAA-793 / NCIMB 8826 / WCFS1) (Lactobacillus plantarum).